Consider the following 103-residue polypeptide: UPF0298 protein LACR_0404 (103 aa).

This sequence belongs to the UPF0298 family.

The protein resides in the cytoplasm. This chain is UPF0298 protein LACR_0404, found in Lactococcus lactis subsp. cremoris (strain SK11).